The chain runs to 448 residues: Zinc finger CCCH domain-containing protein 43 (448 aa).

Positions 1–106 are disordered; it reads MVNSEEIADG…GWSENESENV (106 aa). A compositionally biased stretch (basic and acidic residues) spans 24–45; sequence SSHDRSLSDLNHAAEDLSDKLK. A compositionally biased stretch (polar residues) spans 63–79; it reads VSESNGGLDSNAVVTIN. A compositionally biased stretch (acidic residues) spans 80 to 89; it reads QEEEEEEEDR. 5 C3H1-type zinc fingers span residues 110 to 138, 158 to 186, 204 to 232, 346 to 374, and 392 to 420; these read RPGA…HPLA, KLGL…HTIP, RPGE…HPDP, RPDQ…HPKN, and RPDQ…HSVQ. The interval 424-448 is disordered; that stretch reads STESSQAIVEPPQVSANGNESDGWN. Polar residues predominate over residues 437–448; it reads VSANGNESDGWN.

It localises to the nucleus. The protein is Zinc finger CCCH domain-containing protein 43 of Arabidopsis thaliana (Mouse-ear cress).